The sequence spans 331 residues: Cathepsin S (331 aa).

The signal sequence occupies residues 1 to 16 (MKWLVGLLPLCSYAVA). Positions 17–114 (QVHKDPTLDH…VTYRSNSNQK (98 aa)) are cleaved as a propeptide — activation peptide. Asn-104 carries N-linked (GlcNAc...) asparagine glycosylation. 4 disulfides stabilise this stretch: Cys-126–Cys-224, Cys-136–Cys-180, Cys-170–Cys-213, and Cys-272–Cys-320. Cys-139 is a catalytic residue. Catalysis depends on residues His-278 and Asn-298.

This sequence belongs to the peptidase C1 family.

The protein localises to the lysosome. Its subcellular location is the secreted. It is found in the cytoplasmic vesicle. It localises to the phagosome. It catalyses the reaction Similar to cathepsin L, but with much less activity on Z-Phe-Arg-|-NHMec, and more activity on the Z-Val-Val-Arg-|-Xaa compound.. In terms of biological role, thiol protease. Key protease responsible for the removal of the invariant chain from MHC class II molecules and MHC class II antigen presentation. The bond-specificity of this proteinase is in part similar to the specificities of cathepsin L. In Canis lupus familiaris (Dog), this protein is Cathepsin S (CTSS).